Reading from the N-terminus, the 509-residue chain is MFVEGFRVESPRVRYGDGEIESEYRYDTTEVVAPPSPEKGWVVRPKSVTYHFKTTTTVPKLGVMLVGWGGNNGTTLTAGVIANREGISWATKEKVHKANYFGSLTQSSTIRVGSYNGEEIYAPFKSLVPMVNPNDIVFGGWDISSMNLADAMTRARVLDIDLQKQLRHHMESMVPLPGVYNPDFIAANQGSRANNVIKGTKKEQVEQVKKDIREFKEKSKVDKVVVLWTANTERYSNVVAGMNDTMDNLLASLDKDEPEMSPSTLYAIACVMEGVPFINGSPQNTFVPGLIELAIKKNSVIGGDDFKSGQTKMKSVLVDFLVGAGIKPTSIASYNHLGNNDGMNLSAPQTFRSKEISKSGVVDDMVSSNAILYEPGEHPDHVIVIKYIPYVGDSKRAMDEYTSEIFMGGKNTIVLHNTCEDSLLAAPIILDLVLLAELSTRIQLKAEDQDKYHSFHPVATILSYLSKAPLVPPGTPVVNALAKQRAMLENILRACVGLAPENNMMLEYK.

It belongs to the myo-inositol 1-phosphate synthase family. Requires NAD(+) as cofactor. In terms of tissue distribution, highly expressed in anthers, but transcripts are undetectable in roots, leaves, flowers and embryos.

Its subcellular location is the cytoplasm. It carries out the reaction D-glucose 6-phosphate = 1D-myo-inositol 3-phosphate. The protein operates within polyol metabolism; myo-inositol biosynthesis; myo-inositol from D-glucose 6-phosphate: step 1/2. Its function is as follows. Key enzyme in myo-inositol biosynthesis pathway that catalyzes the conversion of glucose 6-phosphate to 1-myo-inositol 1-phosphate in a NAD-dependent manner. Is a key enzyme in the phytic acid biosynthesis pathway in seeds. The sequence is that of Inositol-3-phosphate synthase 1 from Oryza sativa subsp. japonica (Rice).